The following is a 909-amino-acid chain: WD repeat-containing protein 20 homolog (909 aa).

Residues 58-132 (SPAQGKLGSD…SAGNNTVEAR (75 aa)) are disordered. Low complexity-rich tracts occupy residues 80-107 (GANT…AISN) and 115-127 (SHSN…AGNN). WD repeat units follow at residues 248 to 288 (IDKT…AATA), 321 to 362 (TDNC…GIAR), 363 to 402 (SYFG…VVAR), and 470 to 517 (ADRN…LRHP). 5 disordered regions span residues 458–483 (FEGF…FRSD), 554–628 (SGQA…AGSV), 661–699 (SDSI…NSGS), 720–739 (SEKK…RQHR), and 749–775 (NQHN…GHSS). 2 stretches are compositionally biased toward polar residues: residues 555–569 (GQAT…SCSP) and 595–606 (TANCTISSQSSP). 2 stretches are compositionally biased toward low complexity: residues 612–628 (EAAT…AGSV) and 673–699 (GQRP…NSGS). The stretch at 856–893 (IAHERLTALIFREDCFLTACQDGFIYTWARPGHATHAT) is one WD 5 repeat.

In terms of assembly, component of the Usp12-46 deubiquitylase complex consisting of Usp12-46, Wdr20 and Uaf1; regulatory subunit that, together with Uaf1, stabilizes Usp12-46. The Usp12-46 deubiquitylase complex associates with arr/arrow; the interaction leads to deubiquitination and stabilization of arr/arrow.

In terms of biological role, regulatory component of the Usp12-46 deubiquitylase complex. This complex deubiquitylates the wg/wingless-signaling receptor arr/arrow, which stabilizes the receptor and increases its concentration at the cell surface; this enhances the sensitivity of cells to wg/wingless-signal stimulation. This increases the amplitude and spatial range of the signaling response to the wg/wingless morphogen gradient, facilitating the precise concentration-dependent regulation of its target genes. Required for wg/wingless-mediated signaling in the wing imaginal disc and for wg/wingless-dependent regulation of intestinal stem cell proliferation. This Drosophila melanogaster (Fruit fly) protein is WD repeat-containing protein 20 homolog.